The sequence spans 446 residues: Histidine--tRNA ligase (446 aa).

This sequence belongs to the class-II aminoacyl-tRNA synthetase family. Homodimer.

The protein localises to the cytoplasm. It catalyses the reaction tRNA(His) + L-histidine + ATP = L-histidyl-tRNA(His) + AMP + diphosphate + H(+). The polypeptide is Histidine--tRNA ligase (Paraburkholderia xenovorans (strain LB400)).